An 854-amino-acid chain; its full sequence is DNA mismatch repair protein MutS (854 aa).

616-623 (GPNMGGKS) is a binding site for ATP.

Belongs to the DNA mismatch repair MutS family.

In terms of biological role, this protein is involved in the repair of mismatches in DNA. It is possible that it carries out the mismatch recognition step. This protein has a weak ATPase activity. This is DNA mismatch repair protein MutS from Pectobacterium atrosepticum (strain SCRI 1043 / ATCC BAA-672) (Erwinia carotovora subsp. atroseptica).